The sequence spans 265 residues: Methyl-coenzyme M reductase II subunit gamma (265 aa).

Arg123 is a coenzyme M binding site.

This sequence belongs to the methyl-coenzyme M reductase gamma subunit family. In terms of assembly, MCR is a hexamer of two alpha, two beta, and two gamma chains, forming a dimer of heterotrimers. Coenzyme F430 serves as cofactor.

The enzyme catalyses coenzyme B + methyl-coenzyme M = methane + coenzyme M-coenzyme B heterodisulfide. It participates in one-carbon metabolism; methyl-coenzyme M reduction; methane from methyl-coenzyme M: step 1/1. Functionally, component of the methyl-coenzyme M reductase (MCR) I that catalyzes the reductive cleavage of methyl-coenzyme M (CoM-S-CH3 or 2-(methylthio)ethanesulfonate) using coenzyme B (CoB or 7-mercaptoheptanoylthreonine phosphate) as reductant which results in the production of methane and the mixed heterodisulfide of CoB and CoM (CoM-S-S-CoB). This is the final step in methanogenesis. The chain is Methyl-coenzyme M reductase II subunit gamma (mrtG) from Methanothermobacter marburgensis (strain ATCC BAA-927 / DSM 2133 / JCM 14651 / NBRC 100331 / OCM 82 / Marburg) (Methanobacterium thermoautotrophicum).